The sequence spans 601 residues: Beta-phellandrene synthase (601 aa).

The N-terminal 35 residues, 1-35, are a transit peptide targeting the chloroplast; it reads MSTISIHHVGILRNPLPSKNKRALINNPWSLSLPR. Mn(2+) contacts are provided by D356 and D360. Positions 356–360 match the DDXXD motif motif; the sequence is DDVYD. Homodimerization stretches follow at residues 362 to 368 and 434 to 471; these read YGTLDEL and EAKW…LSIP. Mn(2+) contacts are provided by D499 and E507.

Belongs to the terpene synthase family. Homodimer. Mn(2+) is required as a cofactor. It depends on Mg(2+) as a cofactor. As to expression, expressed in peltate glandular trichomes. Present at low levels in flowers, leaves and stems.

It is found in the plastid. The protein resides in the chloroplast. It catalyses the reaction (2E)-geranyl diphosphate = beta-phellandrene + diphosphate. The catalysed reaction is (2E)-geranyl diphosphate = (1R,5R)-sabinene + diphosphate. It participates in secondary metabolite biosynthesis; terpenoid biosynthesis. In terms of biological role, involved in the biosynthesis of phenolic monoterpenes natural products. Monoterpene synthase that catalyzes mainly the formation of olefins such as sabinene and beta-phellandrene, and minor amounts of other monoterpenes (e.g. myrcene, gamma-terpinene, alpha-thujene and alpha-pinene) from geranyl diphosphate (GPP). The polypeptide is Beta-phellandrene synthase (Origanum vulgare (Wild marjoram)).